The chain runs to 466 residues: Ribulose bisphosphate carboxylase large chain (466 aa).

K5 bears the N6,N6,N6-trimethyllysine mark. Residues N114 and T164 each coordinate substrate. K166 acts as the Proton acceptor in catalysis. K168 is a substrate binding site. Mg(2+) contacts are provided by K192, D194, and E195. Position 192 is an N6-carboxylysine (K192). The active-site Proton acceptor is H285. Residues R286, H318, and S370 each contribute to the substrate site.

This sequence belongs to the RuBisCO large chain family. Type I subfamily. In terms of assembly, heterohexadecamer of 8 large chains and 8 small chains; disulfide-linked. The disulfide link is formed within the large subunit homodimers. The cofactor is Mg(2+). The disulfide bond which can form in the large chain dimeric partners within the hexadecamer appears to be associated with oxidative stress and protein turnover.

The protein resides in the plastid. Its subcellular location is the chloroplast. The enzyme catalyses 2 (2R)-3-phosphoglycerate + 2 H(+) = D-ribulose 1,5-bisphosphate + CO2 + H2O. The catalysed reaction is D-ribulose 1,5-bisphosphate + O2 = 2-phosphoglycolate + (2R)-3-phosphoglycerate + 2 H(+). Functionally, ruBisCO catalyzes two reactions: the carboxylation of D-ribulose 1,5-bisphosphate, the primary event in carbon dioxide fixation, as well as the oxidative fragmentation of the pentose substrate in the photorespiration process. Both reactions occur simultaneously and in competition at the same active site. This Thespesia populnea (Portia tree) protein is Ribulose bisphosphate carboxylase large chain.